Here is a 172-residue protein sequence, read N- to C-terminus: Cell division protein SepF (172 aa).

Residues Asp16–Ser78 are disordered. A compositionally biased stretch (basic and acidic residues) spans Gly17 to Glu48.

Belongs to the SepF family. In terms of assembly, homodimer. Interacts with FtsZ.

Its subcellular location is the cytoplasm. Its function is as follows. Cell division protein that is part of the divisome complex and is recruited early to the Z-ring. Probably stimulates Z-ring formation, perhaps through the cross-linking of FtsZ protofilaments. Its function overlaps with FtsA. The chain is Cell division protein SepF from Renibacterium salmoninarum (strain ATCC 33209 / DSM 20767 / JCM 11484 / NBRC 15589 / NCIMB 2235).